The chain runs to 551 residues: ETS domain-containing transcription factor ERF (551 aa).

Phosphothreonine is present on residues threonine 3 and threonine 7. Phosphoserine occurs at positions 20 and 24. A DNA-binding region (ETS) is located at residues 27-107 (IQLWHFILEL…KGKRFTYKFN (81 aa)). Disordered stretches follow at residues 130–169 (QSAP…SSSS) and 184–304 (GSVS…SHFS). A phosphoserine mark is found at serine 185 and serine 190. The segment covering 239–250 (RGGPEPLSPFPV) has biased composition (pro residues). Residues 251–268 (SPLAGPGSLLPPQLSPAL) show a composition bias toward low complexity. The segment covering 289 to 301 (SGGGGPSGSGGGS) has biased composition (gly residues). Serine 327 carries the phosphoserine modification. The interval 342–476 (PQRPDKCPLP…KPEPGEAPGV (135 aa)) is disordered. A compositionally biased stretch (pro residues) spans 348 to 361 (CPLPPMAPETPPVP). A compositionally biased stretch (low complexity) spans 362–373 (SSASSSSSSSSS). Over residues 404 to 413 (GGSGSGGLAE) the composition is skewed to gly residues. Serine 433 and serine 437 each carry phosphoserine. Residues 433–453 (SEGESEEVEVTDISDEDEEDG) show a composition bias toward acidic residues. Threonine 443 is modified (phosphothreonine). Residue serine 446 is modified to Phosphoserine. Residues lysine 467, lysine 483, and lysine 514 each participate in a glycyl lysine isopeptide (Lys-Gly) (interchain with G-Cter in SUMO2) cross-link. Positions 495–551 (RLEGGGCLSGGPEDEGEDKKVRGDVGPGESGGPLTPRRVSSDLQHATAQLSLEHRDS) are disordered. At threonine 529 the chain carries Phosphothreonine; by MAPK1. 3 positions are modified to phosphoserine: serine 534, serine 535, and serine 551. A compositionally biased stretch (polar residues) spans 535–544 (SDLQHATAQL).

It belongs to the ETS family. Post-translationally, phosphorylated by multiple kinases including MAPK1/ERK2 at THR-529. Phosphorylation regulates the activity of ERF. In terms of tissue distribution, expressed along the osteogenic margins of the developing calvarial bones, in a similar distribution to that observed for the master osteogenic regulator RUNX2.

It localises to the nucleus. Potent transcriptional repressor that binds to the H1 element of the Ets2 promoter. May regulate other genes involved in cellular proliferation. Required for extraembryonic ectoderm differentiation, ectoplacental cone cavity closure, and chorioallantoic attachment. May be important for regulating trophoblast stem cell differentiation. This chain is ETS domain-containing transcription factor ERF (Erf), found in Mus musculus (Mouse).